The primary structure comprises 413 residues: Isobutyryl-CoA dehydrogenase, mitochondrial (413 aa).

Residues methionine 1 to serine 20 constitute a mitochondrion transit peptide. Lysine 48 is subject to N6-acetyllysine; alternate. Position 48 is an N6-succinyllysine; alternate (lysine 48). Residues tyrosine 156–serine 165 and phenylalanine 189–serine 191 contribute to the FAD site. Serine 165 provides a ligand contact to substrate. Lysine 211 is modified (N6-succinyllysine). Residue lysine 229 is modified to N6-acetyllysine. Position 269 is an N6-succinyllysine (lysine 269). Substrate is bound at residue asparagine 272 to arginine 275. Residues arginine 300, serine 310 to glutamine 311, and glutamine 369 to glycine 373 each bind FAD. Catalysis depends on glutamate 396, which acts as the Proton acceptor. Position 398–400 (serine 398–glutamate 400) interacts with FAD. Arginine 408 serves as a coordination point for substrate.

This sequence belongs to the acyl-CoA dehydrogenase family. Homotetramer, formed by a dimer of dimers. It depends on FAD as a cofactor.

It localises to the mitochondrion. It carries out the reaction 2-methylpropanoyl-CoA + oxidized [electron-transfer flavoprotein] + H(+) = 2-methylpropenoyl-CoA + reduced [electron-transfer flavoprotein]. It catalyses the reaction (2S)-2-methylbutanoyl-CoA + oxidized [electron-transfer flavoprotein] + H(+) = (2E)-2-methylbut-2-enoyl-CoA + reduced [electron-transfer flavoprotein]. The catalysed reaction is propanoyl-CoA + oxidized [electron-transfer flavoprotein] + H(+) = acryloyl-CoA + reduced [electron-transfer flavoprotein]. It functions in the pathway amino-acid degradation; L-valine degradation. In terms of biological role, isobutyryl-CoA dehydrogenase which catalyzes the conversion of 2-methylpropanoyl-CoA to (2E)-2-methylpropenoyl-CoA in the valine catabolic pathway. To a lesser extent, also able to catalyze the oxidation of (2S)-2-methylbutanoyl-CoA. The polypeptide is Isobutyryl-CoA dehydrogenase, mitochondrial (Mus musculus (Mouse)).